The sequence spans 308 residues: MNHFLDIHKTDTAELRQMMDSAHAMKAARKGRPKGQFDEDQPLAGRMVALIFEKPSTRTRVSFDVGVRQMGGQTMVLSGKEMQLGHGETIADTARVLSRYVDLIMIRTFEEATLLEMAEHATVPVINGLTNRTHPCQIMADVMTYEEHRGPIAGRKVVWAGDGNNVCASFLHAAGQFGFDFTFTGPPTLDPEAEFVGYAREKGRRVSIERDPAKAVAGADLVVTDTWVSMHDPQSARERRHNQLRPYQVNEALMAQAKPDALFMHCLPAHRDDEATSAVMDGPHSVIFDEAENRLHAQKAIMRWCLGL.

Carbamoyl phosphate contacts are provided by residues 56–59 (STRT), Gln83, Arg107, and 134–137 (HPCQ). L-ornithine is bound by residues Asn165, Asp225, and 229–230 (SM). Residues 266-267 (CL) and Arg294 contribute to the carbamoyl phosphate site.

The protein belongs to the aspartate/ornithine carbamoyltransferase superfamily. OTCase family.

Its subcellular location is the cytoplasm. The enzyme catalyses carbamoyl phosphate + L-ornithine = L-citrulline + phosphate + H(+). It participates in amino-acid degradation; L-arginine degradation via ADI pathway; carbamoyl phosphate from L-arginine: step 2/2. In terms of biological role, reversibly catalyzes the transfer of the carbamoyl group from carbamoyl phosphate (CP) to the N(epsilon) atom of ornithine (ORN) to produce L-citrulline. In Cereibacter sphaeroides (strain KD131 / KCTC 12085) (Rhodobacter sphaeroides), this protein is Ornithine carbamoyltransferase.